Consider the following 238-residue polypeptide: Aspartate/glutamate leucyltransferase (238 aa).

The protein belongs to the R-transferase family. Bpt subfamily.

It localises to the cytoplasm. It catalyses the reaction N-terminal L-glutamyl-[protein] + L-leucyl-tRNA(Leu) = N-terminal L-leucyl-L-glutamyl-[protein] + tRNA(Leu) + H(+). The catalysed reaction is N-terminal L-aspartyl-[protein] + L-leucyl-tRNA(Leu) = N-terminal L-leucyl-L-aspartyl-[protein] + tRNA(Leu) + H(+). In terms of biological role, functions in the N-end rule pathway of protein degradation where it conjugates Leu from its aminoacyl-tRNA to the N-termini of proteins containing an N-terminal aspartate or glutamate. The protein is Aspartate/glutamate leucyltransferase of Shewanella sp. (strain MR-7).